We begin with the raw amino-acid sequence, 430 residues long: Protein translocase subunit SecY (430 aa).

A run of 10 helical transmembrane segments spans residues 18–38 (VIFTLLMLIVFRIGSFIPVPG), 67–87 (FSIFAMGIMPYITASIVMQLL), 118–138 (IVLGFIQALGMSVGFNNFFPG), 145–165 (VSVYLFIALVLTAGTAFLMWL), 177–197 (GISIIIFAGIAAGIPNGLNLI), 213–233 (IVVILLLALAILAIIVGVIFV), 270–290 (VIPVIFALSLFIFPPTVAGLF), 309–329 (PIGMAVYALLIIGFTYFYTFI), 369–389 (FVGSLFLAVVAILPVFFIKFA), and 390–410 (DLPQAIQIGGTGLLIVVGVAL).

Belongs to the SecY/SEC61-alpha family. Component of the Sec protein translocase complex. Heterotrimer consisting of SecY, SecE and SecG subunits. The heterotrimers can form oligomers, although 1 heterotrimer is thought to be able to translocate proteins. Interacts with the ribosome. Interacts with SecDF, and other proteins may be involved. Interacts with SecA.

It is found in the cell membrane. The central subunit of the protein translocation channel SecYEG. Consists of two halves formed by TMs 1-5 and 6-10. These two domains form a lateral gate at the front which open onto the bilayer between TMs 2 and 7, and are clamped together by SecE at the back. The channel is closed by both a pore ring composed of hydrophobic SecY resides and a short helix (helix 2A) on the extracellular side of the membrane which forms a plug. The plug probably moves laterally to allow the channel to open. The ring and the pore may move independently. The chain is Protein translocase subunit SecY from Halalkalibacterium halodurans (strain ATCC BAA-125 / DSM 18197 / FERM 7344 / JCM 9153 / C-125) (Bacillus halodurans).